The chain runs to 179 residues: Caveolin-1 (179 aa).

The residue at position 2 (serine 2) is an N-acetylserine. Serine 2 is subject to Phosphoserine. Positions serine 2–valine 95 are required for homooligomerization. Over serine 2–serine 105 the chain is Cytoplasmic. N6-acetyllysine; alternate is present on lysine 5. A Glycyl lysine isopeptide (Lys-Gly) (interchain with G-Cter in ubiquitin); alternate cross-link involves residue lysine 5. Tyrosine 6 is modified (phosphotyrosine). Phosphoserine is present on serine 9. Tyrosine 14 is subject to Phosphotyrosine; by ABL1. Residue tyrosine 25 is modified to Phosphotyrosine. Residues lysine 26 and lysine 30 each participate in a glycyl lysine isopeptide (Lys-Gly) (interchain with G-Cter in ubiquitin) cross-link. Serine 37 bears the Phosphoserine mark. Glycyl lysine isopeptide (Lys-Gly) (interchain with G-Cter in ubiquitin) cross-links involve residues lysine 39, lysine 48, and lysine 58. Positions aspartate 83–valine 95 are interaction with CAVIN3. Residues alanine 106–leucine 126 constitute an intramembrane region (helical). At histidine 127 to isoleucine 179 the chain is on the cytoplasmic side. Residues valine 132–glutamine 143 form an interacts with SPRY1, SPRY2, SPRY3 and SPRY4 region. Residues cysteine 134, cysteine 144, and cysteine 157 are each lipidated (S-palmitoyl cysteine). The segment at serine 150 to phenylalanine 161 is interacts with SPRY1, SPRY2, and SPRY4. Residues phenylalanine 168–isoleucine 179 are interacts with SPRY1, SPRY2, SPRY3 and SPRY4.

The protein belongs to the caveolin family. In terms of assembly, homooligomer. Interacts with GLIPR2. Interacts with NOSTRIN. Interacts with SNAP25 and STX1A. Interacts (via the N-terminus) with DPP4; the interaction is direct. Interacts with CTNNB1, CDH1 and JUP. Interacts with PACSIN2; this interaction induces membrane tubulation. Interacts with SLC7A9. Interacts with BMX and BTK. Interacts with TGFBR1. Interacts with CAVIN3 (via leucine-zipper domain) in a cholesterol-sensitive manner. Interacts with CAVIN1. Interacts with EHD2 in a cholesterol-dependent manner. Forms a ternary complex with UBXN6 and VCP; mediates CAV1 targeting to lysosomes for degradation. Interacts with ABCG1; this interaction regulates ABCG1-mediated cholesterol efflux. Interacts with NEU3; this interaction enhances NEU3 sialidase activity within caveola. Interacts (via C-terminus) with SPRY1, SPRY2 (via C-terminus), SPRY3, and SPRY4. Interacts with IGFBP5; this interaction allows trafficking of IGFBP5 from the plasma membrane to the nucleus. Phosphorylated at Tyr-14 by ABL1 in response to oxidative stress. In terms of processing, ubiquitinated. Undergo monoubiquitination and multi- and/or polyubiquitination. Monoubiquitination of N-terminal lysines promotes integration in a ternary complex with UBXN6 and VCP which promotes oligomeric CAV1 targeting to lysosomes for degradation. Ubiquitinated by ZNRF1; leading to degradation and modulation of the TLR4-mediated immune response.

It is found in the golgi apparatus membrane. Its subcellular location is the cell membrane. The protein localises to the membrane. The protein resides in the caveola. It localises to the membrane raft. In terms of biological role, may act as a scaffolding protein within caveolar membranes. Forms a stable heterooligomeric complex with CAV2 that targets to lipid rafts and drives caveolae formation. Mediates the recruitment of CAVIN proteins (CAVIN1/2/3/4) to the caveolae. Interacts directly with G-protein alpha subunits and can functionally regulate their activity. Involved in the costimulatory signal essential for T-cell receptor (TCR)-mediated T-cell activation. Its binding to DPP4 induces T-cell proliferation and NF-kappa-B activation in a T-cell receptor/CD3-dependent manner. Recruits CTNNB1 to caveolar membranes and may regulate CTNNB1-mediated signaling through the Wnt pathway. Negatively regulates TGFB1-mediated activation of SMAD2/3 by mediating the internalization of TGFBR1 from membrane rafts leading to its subsequent degradation. Binds 20(S)-hydroxycholesterol (20(S)-OHC). This Eulemur macaco macaco (Black lemur) protein is Caveolin-1 (CAV1).